A 525-amino-acid chain; its full sequence is ATP synthase subunit alpha (525 aa).

An ATP-binding site is contributed by 169–176 (GDRQTGKT).

The protein belongs to the ATPase alpha/beta chains family. As to quaternary structure, F-type ATPases have 2 components, CF(1) - the catalytic core - and CF(0) - the membrane proton channel. CF(1) has five subunits: alpha(3), beta(3), gamma(1), delta(1), epsilon(1). CF(0) has three main subunits: a(1), b(2) and c(9-12). The alpha and beta chains form an alternating ring which encloses part of the gamma chain. CF(1) is attached to CF(0) by a central stalk formed by the gamma and epsilon chains, while a peripheral stalk is formed by the delta and b chains.

It localises to the cell membrane. It catalyses the reaction ATP + H2O + 4 H(+)(in) = ADP + phosphate + 5 H(+)(out). Functionally, produces ATP from ADP in the presence of a proton gradient across the membrane. The alpha chain is a regulatory subunit. The chain is ATP synthase subunit alpha from Mycoplasma capricolum subsp. capricolum (strain California kid / ATCC 27343 / NCTC 10154).